A 95-amino-acid chain; its full sequence is Mitochondrial import inner membrane translocase subunit Tim13 (95 aa).

The short motif at 46 to 69 (CFKKCIGKPGSTLDNSEQKCIAMC) is the Twin CX3C motif element. 2 disulfides stabilise this stretch: cysteine 46–cysteine 69 and cysteine 50–cysteine 65.

It belongs to the small Tim family. In terms of assembly, heterohexamer; composed of 3 copies of TIMM8 (TIMM8A or TIMM8B) and 3 copies of TIMM13, named soluble 70 kDa complex. Associates with the TIM22 complex, whose core is composed of TIMM22.

It is found in the mitochondrion inner membrane. Mitochondrial intermembrane chaperone that participates in the import and insertion of some multi-pass transmembrane proteins into the mitochondrial inner membrane. Also required for the transfer of beta-barrel precursors from the TOM complex to the sorting and assembly machinery (SAM complex) of the outer membrane. Acts as a chaperone-like protein that protects the hydrophobic precursors from aggregation and guide them through the mitochondrial intermembrane space. The TIMM8-TIMM13 complex mediates the import of some proteins while the predominant TIMM9-TIMM10 70 kDa complex mediates the import of much more proteins. The chain is Mitochondrial import inner membrane translocase subunit Tim13 (timm13) from Danio rerio (Zebrafish).